A 220-amino-acid chain; its full sequence is Large ribosomal subunit protein uL3 (220 aa).

Residues 137–159 (GASHGAHKNHRKPGSIGGASTPS) are disordered.

The protein belongs to the universal ribosomal protein uL3 family. Part of the 50S ribosomal subunit. Forms a cluster with proteins L14 and L19.

In terms of biological role, one of the primary rRNA binding proteins, it binds directly near the 3'-end of the 23S rRNA, where it nucleates assembly of the 50S subunit. The sequence is that of Large ribosomal subunit protein uL3 from Renibacterium salmoninarum (strain ATCC 33209 / DSM 20767 / JCM 11484 / NBRC 15589 / NCIMB 2235).